Consider the following 164-residue polypeptide: Phosphopantetheine adenylyltransferase (164 aa).

Serine 10 lines the substrate pocket. ATP contacts are provided by residues 10 to 11 and histidine 18; that span reads SF. Substrate-binding residues include lysine 42, leucine 74, and arginine 88. Residues 89 to 91, glutamate 99, and 124 to 130 each bind ATP; these read GLR and YSFLSSS.

This sequence belongs to the bacterial CoaD family. As to quaternary structure, homohexamer. Requires Mg(2+) as cofactor.

The protein localises to the cytoplasm. The enzyme catalyses (R)-4'-phosphopantetheine + ATP + H(+) = 3'-dephospho-CoA + diphosphate. It participates in cofactor biosynthesis; coenzyme A biosynthesis; CoA from (R)-pantothenate: step 4/5. Reversibly transfers an adenylyl group from ATP to 4'-phosphopantetheine, yielding dephospho-CoA (dPCoA) and pyrophosphate. This is Phosphopantetheine adenylyltransferase from Exiguobacterium sibiricum (strain DSM 17290 / CCUG 55495 / CIP 109462 / JCM 13490 / 255-15).